The sequence spans 162 residues: uncharacterized protein (162 aa).

Residues 29–50 form a C2H2-type zinc finger; that stretch reads CPFCDYTNADAKVVRKHVKSKH. The disordered stretch occupies residues 60–93; sequence KLESQKSKNNGKKQTGQKKQGKGKKQPKRVRETC. The span at 68-87 shows a compositional bias: basic residues; that stretch reads NNGKKQTGQKKQGKGKKQPK.

The protein to M.jannaschii MJECS06.

This is an uncharacterized protein from Methanocaldococcus jannaschii (strain ATCC 43067 / DSM 2661 / JAL-1 / JCM 10045 / NBRC 100440) (Methanococcus jannaschii).